Here is a 90-residue protein sequence, read N- to C-terminus: Small ribosomal subunit protein uS15c (90 aa).

A compositionally biased stretch (polar residues) spans 1-11 (MVKNSFSSVIS). A disordered region spans residues 1–20 (MVKNSFSSVISQEEKKENGG).

It belongs to the universal ribosomal protein uS15 family. In terms of assembly, part of the 30S ribosomal subunit.

The protein localises to the plastid. It localises to the chloroplast. The chain is Small ribosomal subunit protein uS15c (rps15) from Cucumis sativus (Cucumber).